Consider the following 982-residue polypeptide: MPPPAEVTDPSHAPAVLHQLNEQRLRGLFCDVTLIAGDTKFPAHRSVLAASSPFFREALLASAPLPLPPVTGGSAPSPATTTAASSSSSSPPPASPHSSSPPRVLELPGVPAAAFSDVLNFIYSARLALPGGGGDGAAVAEIGALGRRLGISRLQGLGEGGDTWVPPAPTSMVTSDPTEDGLGAGPRTDGEWVGDKAEALTPDSQPRRPFPCPRCGKSFIHPKRLQTHEAQCRRGSNTRGSAGLGPGVSGSGGPAGVDASALPQPVGFRDGPEHVVKVVGGHVLYVCAACERSYVTLSSLKRHSNVHSWRRKYPCRYCEKVFALAEYRTKHEVWHTGERRYQCIFCWDTFVTYYNLKTHQRAFHGISPGLLASEKTPNGGYKPRLNTLKLYRLLPMRAAKRPYKTYSQGAPEAPLSPSLHTPAPAAMPASPQPLPPPAPEPGPPPSVITFAHPAPSVIVHGSSSSGAAGGGPAGTGGSQAASVITYTTPPRPPKKREYPPPPPEPTATPTSPASTAVSPATAAGPATATEEAKGRNLRAGRTLTYTAKPVGGLSGSGGSPTGTGRGSSQLQAPPPLCQITVRIGEEAIVKRRISETDLRPGELSGEEVEESEEEEEEEEEEDQEEQEESKAGGEDQLWRPYYSYKPKRKAGATAGGASGVSGLPRGRRPPRWRQKLERRGWEETPSVEGPGGRGRGERRHRCGDCAQAFATVRKLRKHQEAHSGGSHTSRTGRRSSTRFTCPHCAKVCKTAAALNRHGQRHAVERPGGTPTPVIAYSKGSIGTRPTDVKEEAPQEMQVSSSSGEAGSGSAAAAEASESASLQDPVISGGEEPPVAGGGSYVYPPVQEFPLALIGGSREPSAGKGKPGNEGSLGASEGDRMEGMGTAKVTFYPEPYPLVYGPQLLAAYPYNFSNLAALPVALNMVLPDEKGGGALPFLPGVFGYAVNPQAAPPTPPPPLPLPVSPKGIGGMTGVERTQKGDVG.

The region spanning 30 to 131 (CDVTLIAGDT…IYSARLALPG (102 aa)) is the BTB domain. Residue Lys40 forms a Glycyl lysine isopeptide (Lys-Gly) (interchain with G-Cter in SUMO2) linkage. A disordered region spans residues 71–103 (TGGSAPSPATTTAASSSSSSPPPASPHSSSPPR). The span at 74–89 (SAPSPATTTAASSSSS) shows a compositional bias: low complexity. Residues 165-324 (VPPAPTSMVT…CRYCEKVFAL (160 aa)) are interaction with CBFA2T3. The segment at 210–232 (FPCPRCGKSFIHPKRLQTHEAQC) adopts a C2H2-type 1; atypical zinc-finger fold. Residues 234 to 255 (RGSNTRGSAGLGPGVSGSGGPA) form a disordered region. Positions 242-255 (AGLGPGVSGSGGPA) are enriched in gly residues. 3 consecutive C2H2-type zinc fingers follow at residues 285–307 (YVCAACERSYVTLSSLKRHSNVH), 313–335 (YPCRYCEKVFALAEYRTKHEVWH), and 341–364 (YQCIFCWDTFVTYYNLKTHQRAFH). Ser367 carries the phosphoserine modification. Residues 404–578 (KTYSQGAPEA…QLQAPPPLCQ (175 aa)) are disordered. The span at 430–446 (SPQPLPPPAPEPGPPPS) shows a compositional bias: pro residues. The span at 467–477 (AAGGGPAGTGG) shows a compositional bias: gly residues. Composition is skewed to low complexity over residues 478–488 (SQAASVITYTT) and 507–529 (ATPTSPASTAVSPATAAGPATAT). A Glycyl lysine isopeptide (Lys-Gly) (interchain with G-Cter in SUMO2) cross-link involves residue Lys548. Residues 552–565 (GLSGSGGSPTGTGR) are compositionally biased toward gly residues. Lys590 is covalently cross-linked (Glycyl lysine isopeptide (Lys-Gly) (interchain with G-Cter in SUMO2)). The span at 591–600 (RRISETDLRP) shows a compositional bias: basic and acidic residues. Disordered regions lie at residues 591 to 700 (RRIS…ERRH), 715 to 738 (LRKHQEAHSGGSHTSRTGRRSSTR), 759 to 839 (QRHA…GGGS), and 854 to 880 (GGSREPSAGKGKPGNEGSLGASEGDRM). Residues 604 to 627 (SGEEVEESEEEEEEEEEEDQEEQE) are compositionally biased toward acidic residues. Residues 628 to 637 (ESKAGGEDQL) are compositionally biased toward basic and acidic residues. C2H2-type zinc fingers lie at residues 700 to 722 (HRCGDCAQAFATVRKLRKHQEAH) and 739 to 761 (FTCPHCAKVCKTAAALNRHGQRH). Residues Thr769 and Thr771 each carry the phosphothreonine; by HIPK2 modification. Residues 799 to 820 (SSSSGEAGSGSAAAAEASESAS) are compositionally biased toward low complexity. Thr953 carries the post-translational modification Phosphothreonine; by HIPK2.

Interacts with HIPK2. Interacts with CBFA2T3. Interacts with ZBTB38. In terms of processing, phosphorylated by HIPK2. This phosphorylation reduces stability and triggers ZBTB4 protein degradation in response to DNA damage. In terms of tissue distribution, expressed in adult and aged myogenic satellite cells.

Its subcellular location is the nucleus. The protein localises to the chromosome. Transcriptional repressor with bimodal DNA-binding specificity. Represses transcription in a methyl-CpG-dependent manner. Binds with a higher affinity to methylated CpG dinucleotides in the consensus sequence 5'-CGCG-3' but can also bind to the non-methylated consensus sequence 5'-CTGCNA-3' also known as the consensus kaiso binding site (KBS). Can also bind specifically to a single methyl-CpG pair and can bind hemimethylated DNA but with a lower affinity compared to methylated DNA. Plays a role in postnatal myogenesis, may be involved in the regulation of satellite cells self-renewal. In Mus musculus (Mouse), this protein is Zinc finger and BTB domain-containing protein 4 (Zbtb4).